The chain runs to 502 residues: 4,4'-diapophytoene desaturase (4,4'-diaponeurosporene-forming) (502 aa).

5-17 (VIGAGVTGLAAAA) contacts FAD.

This sequence belongs to the carotenoid/retinoid oxidoreductase family. CrtN subfamily.

The catalysed reaction is 15-cis-4,4'-diapophytoene + 3 FAD + 3 H(+) = all-trans-4,4'-diaponeurosporene + 3 FADH2. Its pathway is carotenoid biosynthesis; staphyloxanthin biosynthesis; staphyloxanthin from farnesyl diphosphate: step 2/5. Involved in the biosynthesis of the yellow-orange carotenoid staphyloxanthin, which plays a role in the virulence via its protective function against oxidative stress. Catalyzes three successive dehydrogenation reactions that lead to the introduction of three double bonds into 4,4'-diapophytoene (dehydrosqualene), with 4,4'-diapophytofluene and 4,4'-diapo-zeta-carotene as intermediates, and 4,4'-diaponeurosporene (the major deep-yellow pigment in staphylococci strains) as the end product. In Staphylococcus aureus (strain MRSA252), this protein is 4,4'-diapophytoene desaturase (4,4'-diaponeurosporene-forming).